A 570-amino-acid polypeptide reads, in one-letter code: METENQKTMEESTKRKEEKKKRSRVKQVLADIAKQVDFWFGDANLHKDKFLREQIEKSRDGYVDISLLVSFNKMKKLTTDGKLIARALKSSSVVELDLEGTRIRRKKPLGERPKDEEERTVYVELLPKNVTHSWIERVFGKCGNVVYISIPHYKSTGDPKGFAFVEFETKEQAAKAIEFLNNPPEEAPRKPGIFPKTVKNKPIPSLRVAEEKKKKKKKKGRIKKEESVQAKESAVDSSSSGVCKATKRPRTASEGSEAETPEAPKQPAKKKKKRDKVEASSLPEARAGKRERCSAEDEDCLPPRPKAKKRAQKDGVGQAASEVSKESRDLEFCSTEEEKETDRKGDSLSKVKRKHKKKHKERHKMGEEVIPLRVLSKTEWMDLKKEYLALQKASMASLKKTISQIKLESEMETDCKAPTAGSGQECSTQEKVSAQGPQFVTGVIVKIVSGEPLPGRKQVKDILATISEVVYIDLLEGDTECHARFKTPEDAQAVMNAQTEIRKKHSWNLEVLSGDHEQRYWQKILVDRQAKLNQPREKKRGTEKLITKAEKIRLAKTQQASQHIRFSEYD.

M1 is modified (N-acetylmethionine). Residues 1-16 (METENQKTMEESTKRK) show a composition bias toward basic and acidic residues. 2 disordered regions span residues 1 to 24 (METE…KRSR) and 180 to 364 (LNNP…ERHK). Residues 22-116 (RSRVKQVLAD…KPLGERPKDE (95 aa)) enclose the HTH La-type RNA-binding domain. An RRM domain is found at 119-197 (RTVYVELLPK…PRKPGIFPKT (79 aa)). Residues 213–222 (KKKKKKKGRI) are compositionally biased toward basic residues. Residue K231 forms a Glycyl lysine isopeptide (Lys-Gly) (interchain with G-Cter in SUMO2) linkage. T251 carries the phosphothreonine modification. A phosphoserine mark is found at S253 and S256. Position 260 is a phosphothreonine (T260). Positions 286–295 (RAGKRERCSA) are enriched in basic and acidic residues. 2 positions are modified to phosphoserine: S294 and S334. Residue T335 is modified to Phosphothreonine. The span at 340 to 349 (ETDRKGDSLS) shows a compositional bias: basic and acidic residues. Phosphoserine is present on S347. Residues 350 to 363 (KVKRKHKKKHKERH) are compositionally biased toward basic residues. Residue K406 forms a Glycyl lysine isopeptide (Lys-Gly) (interchain with G-Cter in SUMO2) linkage. In terms of domain architecture, xRRM spans 438–551 (QFVTGVIVKI…TEKLITKAEK (114 aa)).

The protein belongs to the LARP7 family. In terms of assembly, core component of the 7SK RNP complex, at least composed of 7SK RNA, LARP7, MEPCE, HEXIM1 (or HEXIM2) and P-TEFb (composed of CDK9 and CCNT1/cyclin-T1). Interacts with METTL16. Interacts with RBM7; upon genotoxic stress this interaction is enhanced, triggering the release of inactive P-TEFb complex from the core, yielding to P-TEFb complex activation. Associates with box C/D small nucleolar ribonucleoprotein (snoRNP) complexes.

Its subcellular location is the nucleus. The protein resides in the nucleoplasm. Functionally, RNA-binding protein that specifically binds distinct small nuclear RNA (snRNAs) and regulates their processing and function. Specifically binds the 7SK snRNA (7SK RNA) and acts as a core component of the 7SK ribonucleoprotein (RNP) complex, thereby acting as a negative regulator of transcription elongation by RNA polymerase II. The 7SK RNP complex sequesters the positive transcription elongation factor b (P-TEFb) in a large inactive 7SK RNP complex preventing RNA polymerase II phosphorylation and subsequent transcriptional elongation. The 7SK RNP complex also promotes snRNA gene transcription by RNA polymerase II via interaction with the little elongation complex (LEC). LARP7 specifically binds to the highly conserved 3'-terminal U-rich stretch of 7SK RNA; on stimulation, remains associated with 7SK RNA, whereas P-TEFb is released from the complex. LARP7 also acts as a regulator of mRNA splicing fidelity by promoting U6 snRNA processing. Specifically binds U6 snRNAs and associates with a subset of box C/D RNP complexes: promotes U6 snRNA 2'-O-methylation by facilitating U6 snRNA loading into box C/D RNP complexes. U6 snRNA 2'-O-methylation is required for mRNA splicing fidelity. Binds U6 snRNAs with a 5'-CAGGG-3' sequence motif. U6 snRNA processing is required for spermatogenesis. This is La-related protein 7 from Mus musculus (Mouse).